Reading from the N-terminus, the 245-residue chain is DNA repair protein RecO (245 aa).

Belongs to the RecO family.

In terms of biological role, involved in DNA repair and RecF pathway recombination. The polypeptide is DNA repair protein RecO (Bartonella bacilliformis (strain ATCC 35685 / KC583 / Herrer 020/F12,63)).